The chain runs to 246 residues: Ribonuclease 3 (246 aa).

The RNase III domain occupies 10–143; that stretch reads LERLEQALDY…LLGAIYLDGG (134 aa). Glu56 lines the Mg(2+) pocket. Residue Asp60 is part of the active site. Positions 129 and 132 each coordinate Mg(2+). The active site involves Glu132. Residues 170–239 form the DRBM domain; the sequence is DYKTLLQEYL…AQQALELLIE (70 aa).

The protein belongs to the ribonuclease III family. In terms of assembly, homodimer. Mg(2+) is required as a cofactor.

It is found in the cytoplasm. It catalyses the reaction Endonucleolytic cleavage to 5'-phosphomonoester.. In terms of biological role, digests double-stranded RNA. Involved in the processing of primary rRNA transcript to yield the immediate precursors to the large and small rRNAs (23S and 16S). Processes some mRNAs, and tRNAs when they are encoded in the rRNA operon. Processes pre-crRNA and tracrRNA of type II CRISPR loci if present in the organism. In Magnetococcus marinus (strain ATCC BAA-1437 / JCM 17883 / MC-1), this protein is Ribonuclease 3.